Here is a 312-residue protein sequence, read N- to C-terminus: Malate dehydrogenase (312 aa).

NAD(+) contacts are provided by residues 7-13 (GAAGGIG) and Asp34. Substrate-binding residues include Arg81 and Arg87. NAD(+) is bound by residues Asn94 and 117–119 (ITN). 2 residues coordinate substrate: Asn119 and Arg153. The Proton acceptor role is filled by His177. Met227 is a binding site for NAD(+).

This sequence belongs to the LDH/MDH superfamily. MDH type 1 family. Homodimer.

The catalysed reaction is (S)-malate + NAD(+) = oxaloacetate + NADH + H(+). Its function is as follows. Catalyzes the reversible oxidation of malate to oxaloacetate. In Pectobacterium carotovorum subsp. carotovorum (strain PC1), this protein is Malate dehydrogenase.